A 641-amino-acid chain; its full sequence is Epsin-2 (641 aa).

A 1,2-diacyl-sn-glycero-3-phospho-(1D-myo-inositol-4,5-bisphosphate) is bound by residues Arg8, Lys11, Arg25, Asn30, Arg63, and His73. Residues 12-144 form the ENTH domain; that stretch reads NIVNNYSEAE…KDEERLKAER (133 aa). Phosphoserine occurs at positions 153 and 156. Residues 163 to 181 are compositionally biased toward polar residues; it reads SNQITFGRGSSQPNLSTSH. Disordered stretches follow at residues 163 to 214 and 255 to 275; these read SNQI…GAPL and RATS…TSGE. At Arg170 the chain carries Omega-N-methylarginine. Residues Ser173, Ser192, and Ser195 each carry the phosphoserine modification. The segment covering 259–273 has biased composition (polar residues); it reads PRVSSELEQARPQTS. 2 consecutive UIM domains span residues 275–294 and 300–319; these read EEEL…AEQE and GDDL…TVKI. Positions 340–425 are disordered; the sequence is ALPSSGPAAQ…QPASSAGKRA (86 aa). A run of 6 repeats spans residues 352-354, 364-366, 377-379, 391-393, 409-411, and 427-429. The 6 X 3 AA repeats of [DE]-P-W stretch occupies residues 352-639; that stretch reads EPWGPSASTN…AQATGTTNPF (288 aa). Over residues 408 to 421 the composition is skewed to low complexity; sequence SDPWAASQQPASSA. The tract at residues 470-512 is disordered; that stretch reads TAESVTSLPSQNNGTTSPDPFESQPLTVASSKPSSARKTPESF. The segment covering 472-506 has biased composition (polar residues); it reads ESVTSLPSQNNGTTSPDPFESQPLTVASSKPSSAR. The residue at position 486 (Ser486) is a Phosphoserine. A Phosphothreonine modification is found at Thr508. 2 tandem repeats follow at residues 537-539 and 552-554. Residues 537-639 are 3 X 3 AA repeats of N-P-F; it reads NPFLAPGAPA…AQATGTTNPF (103 aa). A Phosphoserine modification is found at Ser570. Copy 3 of the repeat occupies 637–639; that stretch reads NPF.

This sequence belongs to the epsin family. In terms of assembly, binds EPS15. Interacts with ITSN1. Binds AP-2 and clathrin. Interacts with UBQLN2. In terms of processing, ubiquitinated. In terms of tissue distribution, highest expression is found in brain. Detected at lower levels in lung and liver.

It localises to the cytoplasm. The protein resides in the cytoplasmic vesicle. It is found in the clathrin-coated vesicle. Functionally, plays a role in the formation of clathrin-coated invaginations and endocytosis. This is Epsin-2 (EPN2) from Homo sapiens (Human).